The chain runs to 122 residues: Large ribosomal subunit protein uL14c (122 aa).

The protein belongs to the universal ribosomal protein uL14 family. As to quaternary structure, part of the 50S ribosomal subunit.

Its subcellular location is the plastid. It localises to the chloroplast. In terms of biological role, binds to 23S rRNA. The chain is Large ribosomal subunit protein uL14c from Jasminum nudiflorum (Winter jasmine).